A 350-amino-acid chain; its full sequence is Major allergen Mal f 1 (350 aa).

An N-terminal signal peptide occupies residues M1–A22.

It localises to the secreted. The protein resides in the cell wall. The protein is Major allergen Mal f 1 of Malassezia furfur (Pityriasis versicolor infection agent).